The primary structure comprises 572 residues: Proline--tRNA ligase (572 aa).

Belongs to the class-II aminoacyl-tRNA synthetase family. ProS type 1 subfamily. As to quaternary structure, homodimer.

It is found in the cytoplasm. The enzyme catalyses tRNA(Pro) + L-proline + ATP = L-prolyl-tRNA(Pro) + AMP + diphosphate. Catalyzes the attachment of proline to tRNA(Pro) in a two-step reaction: proline is first activated by ATP to form Pro-AMP and then transferred to the acceptor end of tRNA(Pro). As ProRS can inadvertently accommodate and process non-cognate amino acids such as alanine and cysteine, to avoid such errors it has two additional distinct editing activities against alanine. One activity is designated as 'pretransfer' editing and involves the tRNA(Pro)-independent hydrolysis of activated Ala-AMP. The other activity is designated 'posttransfer' editing and involves deacylation of mischarged Ala-tRNA(Pro). The misacylated Cys-tRNA(Pro) is not edited by ProRS. The protein is Proline--tRNA ligase of Yersinia pseudotuberculosis serotype IB (strain PB1/+).